The following is a 341-amino-acid chain: tRNA N6-adenosine threonylcarbamoyltransferase (341 aa).

Residues His-111 and His-115 each contribute to the Fe cation site. Substrate contacts are provided by residues 134 to 138 (LVSGG), Asp-167, Gly-180, and Asn-276. A Fe cation-binding site is contributed by Asp-304.

This sequence belongs to the KAE1 / TsaD family. Requires Fe(2+) as cofactor.

The protein resides in the cytoplasm. It carries out the reaction L-threonylcarbamoyladenylate + adenosine(37) in tRNA = N(6)-L-threonylcarbamoyladenosine(37) in tRNA + AMP + H(+). Its function is as follows. Required for the formation of a threonylcarbamoyl group on adenosine at position 37 (t(6)A37) in tRNAs that read codons beginning with adenine. Is involved in the transfer of the threonylcarbamoyl moiety of threonylcarbamoyl-AMP (TC-AMP) to the N6 group of A37, together with TsaE and TsaB. TsaD likely plays a direct catalytic role in this reaction. In Pseudomonas syringae pv. syringae (strain B728a), this protein is tRNA N6-adenosine threonylcarbamoyltransferase.